Here is a 336-residue protein sequence, read N- to C-terminus: Cytoskeleton protein RodZ (336 aa).

Residues 1–111 lie on the Cytoplasmic side of the membrane; that stretch reads MNTEATHDQN…LGKRRKKRDG (111 aa). Positions 19-71 constitute an HTH cro/C1-type domain; it reads LRNAREQLGLSQQAVAERLCLKVSTVRDIEEDKAPADLASTFLRGYIRSYARL. Residues 30–49 constitute a DNA-binding region (H-T-H motif); it reads QQAVAERLCLKVSTVRDIEE. The helical; Signal-anchor for type II membrane protein transmembrane segment at 112–132 threads the bilayer; that stretch reads WLMTFTWLVLFVVIGLSGAWW. The Periplasmic portion of the chain corresponds to 133–336; the sequence is WQDHKAQQEE…TLNAEQSPAQ (204 aa). The span at 148-164 shows a compositional bias: polar residues; the sequence is DQSSAELNNNQSQSVPL. Positions 148-248 are disordered; that stretch reads DQSSAELNNN…TDQAGVTTPA (101 aa). The segment covering 165–201 has biased composition (low complexity); that stretch reads DTSTTTDQAMATTPTSPVDTTATNTQTPAATTAPSPT. Polar residues predominate over residues 202–217; the sequence is VDSQQNAVVPPSQANV. Over residues 219-236 the composition is skewed to low complexity; sequence TAATPAPAATTMPDGAAP.

This sequence belongs to the RodZ family.

It localises to the cell inner membrane. Functionally, cytoskeletal protein that is involved in cell-shape control through regulation of the length of the long axis. The polypeptide is Cytoskeleton protein RodZ (Escherichia coli (strain SMS-3-5 / SECEC)).